Reading from the N-terminus, the 233-residue chain is Adenosine 5'-phosphosulfate reductase 1 (233 aa).

[4Fe-4S] cluster-binding residues include cysteine 120, cysteine 121, cysteine 203, and cysteine 206. Cysteine 229 acts as the Nucleophile; cysteine thiosulfonate intermediate in catalysis.

Belongs to the PAPS reductase family. CysH subfamily. Requires [4Fe-4S] cluster as cofactor.

The protein localises to the cytoplasm. The enzyme catalyses [thioredoxin]-disulfide + sulfite + AMP + 2 H(+) = adenosine 5'-phosphosulfate + [thioredoxin]-dithiol. It participates in sulfur metabolism; hydrogen sulfide biosynthesis; sulfite from sulfate. Catalyzes the formation of sulfite from adenosine 5'-phosphosulfate (APS) using thioredoxin as an electron donor. This Bacillus subtilis (strain 168) protein is Adenosine 5'-phosphosulfate reductase 1 (cysH).